The primary structure comprises 141 residues: Small ribosomal subunit protein uS19 (141 aa).

The protein belongs to the universal ribosomal protein uS19 family.

Its function is as follows. Protein S19 forms a complex with S13 that binds strongly to the 16S ribosomal RNA. The polypeptide is Small ribosomal subunit protein uS19 (Halorubrum lacusprofundi (strain ATCC 49239 / DSM 5036 / JCM 8891 / ACAM 34)).